Here is a 429-residue protein sequence, read N- to C-terminus: Glutamate-1-semialdehyde 2,1-aminomutase 2 (429 aa).

Lys268 is subject to N6-(pyridoxal phosphate)lysine.

This sequence belongs to the class-III pyridoxal-phosphate-dependent aminotransferase family. HemL subfamily. Homodimer. Requires pyridoxal 5'-phosphate as cofactor.

It localises to the cytoplasm. It carries out the reaction (S)-4-amino-5-oxopentanoate = 5-aminolevulinate. It functions in the pathway porphyrin-containing compound metabolism; protoporphyrin-IX biosynthesis; 5-aminolevulinate from L-glutamyl-tRNA(Glu): step 2/2. The sequence is that of Glutamate-1-semialdehyde 2,1-aminomutase 2 from Geobacillus thermodenitrificans (strain NG80-2).